The sequence spans 118 residues: Protein yippee-like 1 (118 aa).

The 98-residue stretch at 19 to 116 (RTYSCIHCRA…IELAHMIKDN (98 aa)) folds into the Yippee domain. Zn(2+) is bound by residues cysteine 23, cysteine 26, cysteine 79, and cysteine 82. The Nuclear localization signal motif lies at 99–104 (KYKEGK).

Belongs to the yippee family.

The protein resides in the nucleus. May play a role in epithelioid conversion of fibroblasts. The sequence is that of Protein yippee-like 1 (Ypel1) from Mus musculus (Mouse).